We begin with the raw amino-acid sequence, 483 residues long: Chromosomal replication initiator protein DnaA (483 aa).

The domain I, interacts with DnaA modulators stretch occupies residues 1–71 (MKEFWQTCVS…EALAAEWYQR (71 aa)). The tract at residues 71 to 145 (RPVQVQFELP…DAANIVYERS (75 aa)) is domain II. The domain III, AAA+ region stretch occupies residues 146 to 362 (RLNTDLTFEN…GALRKVLAYA (217 aa)). Residues G190, G192, K193, and T194 each contribute to the ATP site. The tract at residues 363–483 (RFHGREALNV…LHVLEQTLKG (121 aa)) is domain IV, binds dsDNA.

Belongs to the DnaA family. In terms of assembly, oligomerizes as a right-handed, spiral filament on DNA at oriC.

It is found in the cytoplasm. Functionally, plays an essential role in the initiation and regulation of chromosomal replication. ATP-DnaA binds to the origin of replication (oriC) to initiate formation of the DNA replication initiation complex once per cell cycle. Binds the DnaA box (a 9 base pair repeat at the origin) and separates the double-stranded (ds)DNA. Forms a right-handed helical filament on oriC DNA; dsDNA binds to the exterior of the filament while single-stranded (ss)DNA is stabiized in the filament's interior. The ATP-DnaA-oriC complex binds and stabilizes one strand of the AT-rich DNA unwinding element (DUE), permitting loading of DNA polymerase. After initiation quickly degrades to an ADP-DnaA complex that is not apt for DNA replication. Binds acidic phospholipids. In Bordetella avium (strain 197N), this protein is Chromosomal replication initiator protein DnaA.